The sequence spans 515 residues: Glucose-6-phosphate 1-dehydrogenase (515 aa).

Ala-2 carries the N-acetylalanine modification. At Ser-8 the chain carries Phosphoserine. Phosphothreonine is present on Thr-10. 38-45 (GASGDLAK) contacts NADP(+). Lys-89 carries the N6-acetyllysine modification. NADP(+) contacts are provided by Tyr-147 and Lys-171. D-glucose 6-phosphate-binding positions include Lys-171, 201–205 (HYLGK), Glu-239, and Glu-258. Lys-171 carries the post-translational modification N6-(2-hydroxyisobutyryl)lysine; alternate. Lys-171 bears the N6-acetyllysine; alternate mark. Arg-357 serves as a coordination point for NADP(+). D-glucose 6-phosphate-binding residues include Lys-360 and Arg-365. Residues Lys-366, Arg-370, and Arg-393 each contribute to the NADP(+) site. D-glucose 6-phosphate is bound at residue Gln-395. NADP(+) is bound by residues 401-403 (YTK) and 421-423 (DLT). Lys-403 bears the N6-acetyllysine mark. Position 432 is an N6-acetyllysine (Lys-432). Arg-487 lines the NADP(+) pocket. Position 497 is an N6-acetyllysine (Lys-497). NADP(+) contacts are provided by Tyr-503 and Trp-509. A Phosphotyrosine modification is found at Tyr-503.

The protein belongs to the glucose-6-phosphate dehydrogenase family. As to quaternary structure, homotetramer; dimer of dimers. Interacts with SIRT2; the interaction is enhanced by H(2)O(2) treatment. Forms a ternary complex with ALDOB and TP53; this interaction is direct. ALDOB stabilizes the complex inhibiting G6PD activity and keeping oxidative pentose phosphate metabolism in check. Acetylated by ELP3 at Lys-403; acetylation inhibits its homodimerization and enzyme activity. Deacetylated by SIRT2 at Lys-403; deacetylation stimulates its enzyme activity.

It is found in the cytoplasm. The protein resides in the cytosol. Its subcellular location is the membrane. It catalyses the reaction D-glucose 6-phosphate + NADP(+) = 6-phospho-D-glucono-1,5-lactone + NADPH + H(+). The protein operates within carbohydrate degradation; pentose phosphate pathway; D-ribulose 5-phosphate from D-glucose 6-phosphate (oxidative stage): step 1/3. Cytosolic glucose-6-phosphate dehydrogenase that catalyzes the first and rate-limiting step of the oxidative branch within the pentose phosphate pathway/shunt, an alternative route to glycolysis for the dissimilation of carbohydrates and a major source of reducing power and metabolic intermediates for fatty acid and nucleic acid biosynthetic processes. The protein is Glucose-6-phosphate 1-dehydrogenase (G6PD) of Bos indicus (Zebu).